The sequence spans 96 residues: Prokineticin Bm8-f (96 aa).

The N-terminal stretch at 1–19 is a signal peptide; the sequence is MKCFAQIVVLLLVIAFSHG. Disulfide bonds link cysteine 26/cysteine 38, cysteine 32/cysteine 50, cysteine 37/cysteine 78, cysteine 60/cysteine 86, and cysteine 80/cysteine 95.

It belongs to the AVIT (prokineticin) family. Expressed by the skin glands.

The protein localises to the secreted. In terms of biological role, potent agonist for both PKR1/PROKR1 and PKR2/PROKR2, and inducer of a potent and long-lasting hyperalgesia. Also potentiates capsaicin-induced TRPV1 current, when tested on DRG neurons. At subnanomolar concentrations, this protein both induces potent chemotaxis of macrophages and stimulates LPS-induced production of the pro-inflammatory cytokines IL-1 and IL-12. In vivo, potently stimulates the contraction of the guinea-pig gastrointestinal (GI) smooth muscle (nanomolar concentration). This Bombina maxima (Giant fire-bellied toad) protein is Prokineticin Bm8-f.